Consider the following 434-residue polypeptide: V-type ATP synthase beta chain (434 aa).

It belongs to the ATPase alpha/beta chains family.

Produces ATP from ADP in the presence of a proton gradient across the membrane. The V-type beta chain is a regulatory subunit. The polypeptide is V-type ATP synthase beta chain (atpB) (Borreliella burgdorferi (strain ATCC 35210 / DSM 4680 / CIP 102532 / B31) (Borrelia burgdorferi)).